Consider the following 383-residue polypeptide: L-Ala-D/L-Glu epimerase (383 aa).

Substrate contacts are provided by residues R68, Y94, and 198-200 (KVK). The Mg(2+) site is built by D224, E251, and D276. Substrate-binding positions include K298, 326–328 (CMT), and 348–350 (DLD).

The protein belongs to the mandelate racemase/muconate lactonizing enzyme family. It depends on Mg(2+) as a cofactor.

It catalyses the reaction L-alanyl-L-glutamate = L-alanyl-D-glutamate. Its function is as follows. Catalyzes the epimerization of L-Ala-D-Glu to L-Ala-L-Glu and may play a role in the metabolism of the murein peptide, of which L-Ala-D-Glu is a component. Is also able to catalyze the epimerization of L-Ala-D-Asp, L-Ala-L-Glu, L-Ala-L-Ser, L-Ala-L-Pro, L-Ala-L-L-Val, L-Ala-L-Thr, L-Ala-L-Leu, L-Ala-L-Ile and L-Gly-L-Glu (in vitro). In Bacteroides thetaiotaomicron (strain ATCC 29148 / DSM 2079 / JCM 5827 / CCUG 10774 / NCTC 10582 / VPI-5482 / E50), this protein is L-Ala-D/L-Glu epimerase.